The following is a 423-amino-acid chain: Phosphoribosylamine--glycine ligase (423 aa).

Positions 107-312 (KDLCARYDIP…LLPILYATAT (206 aa)) constitute an ATP-grasp domain. Position 133–193 (133–193 (VRAQGAPIVI…EAFLDGEEAS (61 aa))) interacts with ATP. The Mg(2+) site is built by E282 and N284.

Belongs to the GARS family. The cofactor is Mg(2+). Mn(2+) is required as a cofactor.

It catalyses the reaction 5-phospho-beta-D-ribosylamine + glycine + ATP = N(1)-(5-phospho-beta-D-ribosyl)glycinamide + ADP + phosphate + H(+). It participates in purine metabolism; IMP biosynthesis via de novo pathway; N(1)-(5-phospho-D-ribosyl)glycinamide from 5-phospho-alpha-D-ribose 1-diphosphate: step 2/2. The protein is Phosphoribosylamine--glycine ligase of Agrobacterium fabrum (strain C58 / ATCC 33970) (Agrobacterium tumefaciens (strain C58)).